The sequence spans 148 residues: Nickel and cobalt resistance protein CnrR (148 aa).

The N-terminal stretch at 1–26 is a signal peptide; sequence MMKSRTRRLSLSTLFGALLGVSVAAA. Topologically, residues 28–148 are periplasmic; sequence LYYSHRNEAG…LIDALRRGSQ (121 aa). The stretch at 54-117 forms a coiled coil; the sequence is NEREILELKE…AAGDLQRATL (64 aa).

It to A.xylosoxydans NccX.

It localises to the periplasm. Its function is as follows. CnrH alone is able to activate cnr expression, while both CnrY and CrnR (CnrX) are needed for nickel induction of CnrH. Has been suggested to bind nickel. The sequence is that of Nickel and cobalt resistance protein CnrR (cnrR) from Cupriavidus metallidurans (strain ATCC 43123 / DSM 2839 / NBRC 102507 / CH34) (Ralstonia metallidurans).